The sequence spans 85 residues: MAHKKGVGSTRNGRDSESKRLGCKKFGGETVKAGNIIYRQRGTQIHPGTNVGCGKDYTLFALIDGVVKFERLGRDRKKVSVYPAN.

The disordered stretch occupies residues methionine 1–leucine 21.

This sequence belongs to the bacterial ribosomal protein bL27 family.

The sequence is that of Large ribosomal subunit protein bL27 from Geobacter sulfurreducens (strain ATCC 51573 / DSM 12127 / PCA).